The chain runs to 264 residues: Thymidylate synthase (264 aa).

R21 is a binding site for dUMP. A (6R)-5,10-methylene-5,6,7,8-tetrahydrofolate-binding site is contributed by H51. Position 126 to 127 (126 to 127) interacts with dUMP; that stretch reads RR. C146 serves as the catalytic Nucleophile. Residues 166-169, N177, and 207-209 each bind dUMP; these read RSAD and HIY. D169 contacts (6R)-5,10-methylene-5,6,7,8-tetrahydrofolate. Residue A263 coordinates (6R)-5,10-methylene-5,6,7,8-tetrahydrofolate.

Belongs to the thymidylate synthase family. Bacterial-type ThyA subfamily. As to quaternary structure, homodimer.

It localises to the cytoplasm. It catalyses the reaction dUMP + (6R)-5,10-methylene-5,6,7,8-tetrahydrofolate = 7,8-dihydrofolate + dTMP. Its pathway is pyrimidine metabolism; dTTP biosynthesis. Functionally, catalyzes the reductive methylation of 2'-deoxyuridine-5'-monophosphate (dUMP) to 2'-deoxythymidine-5'-monophosphate (dTMP) while utilizing 5,10-methylenetetrahydrofolate (mTHF) as the methyl donor and reductant in the reaction, yielding dihydrofolate (DHF) as a by-product. This enzymatic reaction provides an intracellular de novo source of dTMP, an essential precursor for DNA biosynthesis. This Brucella anthropi (strain ATCC 49188 / DSM 6882 / CCUG 24695 / JCM 21032 / LMG 3331 / NBRC 15819 / NCTC 12168 / Alc 37) (Ochrobactrum anthropi) protein is Thymidylate synthase.